The primary structure comprises 305 residues: Nucleotide-binding protein Mjls_2437 (305 aa).

28–35 (GLSGAGRG) provides a ligand contact to ATP. Position 79–82 (79–82 (DVRS)) interacts with GTP.

Belongs to the RapZ-like family.

In terms of biological role, displays ATPase and GTPase activities. The sequence is that of Nucleotide-binding protein Mjls_2437 from Mycobacterium sp. (strain JLS).